A 448-amino-acid chain; its full sequence is tRNA modification GTPase MnmE (448 aa).

(6S)-5-formyl-5,6,7,8-tetrahydrofolate-binding residues include Arg22, Glu83, and Arg122. The 151-residue stretch at 219 to 369 (GVKTVIVGRP…LESEILKTLK (151 aa)) folds into the TrmE-type G domain. Asn229 is a K(+) binding site. GTP-binding positions include 229–234 (NVGKSS), 248–254 (SDIAGTT), and 273–276 (DTAG). Ser233 contributes to the Mg(2+) binding site. Residues Ser248, Ile250, and Thr253 each contribute to the K(+) site. Thr254 provides a ligand contact to Mg(2+). Lys448 contacts (6S)-5-formyl-5,6,7,8-tetrahydrofolate.

Belongs to the TRAFAC class TrmE-Era-EngA-EngB-Septin-like GTPase superfamily. TrmE GTPase family. As to quaternary structure, homodimer. Heterotetramer of two MnmE and two MnmG subunits. Requires K(+) as cofactor.

The protein resides in the cytoplasm. Exhibits a very high intrinsic GTPase hydrolysis rate. Involved in the addition of a carboxymethylaminomethyl (cmnm) group at the wobble position (U34) of certain tRNAs, forming tRNA-cmnm(5)s(2)U34. This chain is tRNA modification GTPase MnmE, found in Acholeplasma laidlawii (strain PG-8A).